A 341-amino-acid polypeptide reads, in one-letter code: tRNA N6-adenosine threonylcarbamoyltransferase (341 aa).

2 residues coordinate Fe cation: H118 and H122. Substrate-binding positions include 141–145 (LVSGG), D174, G187, and N281. D309 is a binding site for Fe cation.

This sequence belongs to the KAE1 / TsaD family. Fe(2+) serves as cofactor.

It localises to the cytoplasm. The enzyme catalyses L-threonylcarbamoyladenylate + adenosine(37) in tRNA = N(6)-L-threonylcarbamoyladenosine(37) in tRNA + AMP + H(+). Functionally, required for the formation of a threonylcarbamoyl group on adenosine at position 37 (t(6)A37) in tRNAs that read codons beginning with adenine. Is involved in the transfer of the threonylcarbamoyl moiety of threonylcarbamoyl-AMP (TC-AMP) to the N6 group of A37, together with TsaE and TsaB. TsaD likely plays a direct catalytic role in this reaction. The sequence is that of tRNA N6-adenosine threonylcarbamoyltransferase from Desulfitobacterium hafniense (strain Y51).